The sequence spans 455 residues: Argininosuccinate lyase (455 aa).

Belongs to the lyase 1 family. Argininosuccinate lyase subfamily.

The protein resides in the cytoplasm. It carries out the reaction 2-(N(omega)-L-arginino)succinate = fumarate + L-arginine. Its pathway is amino-acid biosynthesis; L-arginine biosynthesis; L-arginine from L-ornithine and carbamoyl phosphate: step 3/3. The polypeptide is Argininosuccinate lyase (Caulobacter sp. (strain K31)).